Consider the following 414-residue polypeptide: Gamma-glutamyl phosphate reductase (414 aa).

It belongs to the gamma-glutamyl phosphate reductase family.

It localises to the cytoplasm. It carries out the reaction L-glutamate 5-semialdehyde + phosphate + NADP(+) = L-glutamyl 5-phosphate + NADPH + H(+). It participates in amino-acid biosynthesis; L-proline biosynthesis; L-glutamate 5-semialdehyde from L-glutamate: step 2/2. Functionally, catalyzes the NADPH-dependent reduction of L-glutamate 5-phosphate into L-glutamate 5-semialdehyde and phosphate. The product spontaneously undergoes cyclization to form 1-pyrroline-5-carboxylate. This chain is Gamma-glutamyl phosphate reductase, found in Xanthomonas oryzae pv. oryzae (strain MAFF 311018).